The sequence spans 530 residues: MSRSPQRALPPGALPRLLQAAPAAAPRALLPQWPRRPGRRWPASPLGMKVFRRKALVLCAGYALLLVLTMLNLLDYKWHKEPLQQCNPDGPLGAAAGAAGGSWGRPGPPPAGPPRAHARLDLRTPYRPPAAAVGAAPAAAAGMAGVAAPPGNGTRGTGGVGDKRQLVYVFTTWRSGSSFFGELFNQNPEVFFLYEPVWHVWQKLYPGDAVSLQGAARDMLSALYRCDLSVFQLYSPAGSGGRNLTTLGIFGAATNKVVCSSPLCPAYRKEVVGLVDDRVCKKCPPQRLARFEEECRKYRTLVIKGVRVFDVAVLAPLLRDPALDLKVIHLVRDPRAVASSRIRSRHGLIRESLQVVRSRDPRAHRMPFLEAAGHKLGAKKEGVGGPADYHALGAMEVICNSMAKTLQTALQPPDWLQGHYLVVRYEDLVGDPVKTLRRVYDFVGLLVSPEMEQFALNMTSGSGSSSKPFVVSARNATQAANAWRTALTFQQIKQVEEFCYQPMAVLGYERVNSPEEVKDLSKTLLRKPRL.

Residues 1–54 are Cytoplasmic-facing; the sequence is MSRSPQRALPPGALPRLLQAAPAAAPRALLPQWPRRPGRRWPASPLGMKVFRRK. The helical; Signal-anchor for type II membrane protein transmembrane segment at 55–75 threads the bilayer; that stretch reads ALVLCAGYALLLVLTMLNLLD. The Lumenal portion of the chain corresponds to 76 to 530; the sequence is YKWHKEPLQQ…SKTLLRKPRL (455 aa). The interval 89–119 is disordered; sequence DGPLGAAAGAAGGSWGRPGPPPAGPPRAHAR. Residue 173–179 participates in 3'-phosphoadenylyl sulfate binding; the sequence is WRSGSSF. N-linked (GlcNAc...) asparagine glycosylation occurs at Asn-243. 332 to 340 is a binding site for 3'-phosphoadenylyl sulfate; that stretch reads RDPRAVASS. Asn-457 and Asn-475 each carry an N-linked (GlcNAc...) asparagine glycan.

It belongs to the sulfotransferase 1 family. Gal/GlcNAc/GalNAc subfamily. Homodimer; disulfide-linked. Homodimerization is not essential for enzyme activity. Glycosylation at Asn-475 is required for catalytic activity. As to expression, widely expressed. Highly expressed in bone marrow, peripheral blood leukocytes, spleen, brain, spinal cord, ovary and placenta. Expressed by high endothelial cells (HEVs) and leukocytes.

It localises to the golgi apparatus. It is found in the trans-Golgi network membrane. The catalysed reaction is 3-O-{N-acetyl-beta-D-glucosaminyl-(1-&gt;3)-beta-D-galactosyl-(1-&gt;3)-N-acetyl-alpha-D-galactosaminyl}-L-threonyl-[protein] + 3'-phosphoadenylyl sulfate = 3-O-{6-O-sulfo-N-acetyl-beta-D-glucosaminyl-(1-&gt;3)-beta-D-galactosyl-(1-&gt;3)-N-acetyl-alpha-D-galactosaminyl}-L-threonyl-[protein] + adenosine 3',5'-bisphosphate + H(+). It catalyses the reaction 3-O-{N-acetyl-beta-D-glucosaminyl-(1-&gt;3)-beta-D-galactosyl-(1-&gt;3)-N-acetyl-alpha-D-galactosaminyl}-L-seryl-[protein] + 3'-phosphoadenylyl sulfate = 3-O-{6-O-sulfo-N-acetyl-beta-D-glucosaminyl-(1-&gt;3)-beta-D-galactosyl-(1-&gt;3)-N-acetyl-alpha-D-galactosaminyl}-L-seryl-[protein] + adenosine 3',5'-bisphosphate + H(+). It carries out the reaction a 3-O-{beta-D-galactosyl-(1-&gt;3)-[N-acetyl-beta-D-glucosaminyl-(1-&gt;6)]-N-acetyl-alpha-D-galactosaminyl}-L-threonyl-[protein] + 3'-phosphoadenylyl sulfate = 3-O-{beta-D-galactosyl-(1-&gt;3)-[6-O-sulfo-N-acetyl-beta-D-glucosaminyl-(1-&gt;6)]-N-acetyl-alpha-D-galactosaminyl}-L-threonyl-[protein] + adenosine 3',5'-bisphosphate + H(+). The enzyme catalyses 3-O-{beta-D-galactosyl-(1-&gt;3)-[N-acetyl-beta-D-glucosaminyl-(1-&gt;6)]-N-acetyl-alpha-D-galactosaminyl}-L-seryl-[protein] + 3'-phosphoadenylyl sulfate = 3-O-{beta-D-galactosyl-(1-&gt;3)-[6-O-sulfo-N-acetyl-beta-D-glucosaminyl-(1-&gt;6)]-N-acetyl-alpha-D-galactosaminyl}-L-seryl-[protein] + adenosine 3',5'-bisphosphate + H(+). It participates in protein modification; carbohydrate sulfation. Sulfotransferase that utilizes 3'-phospho-5'-adenylyl sulfate (PAPS) as sulfonate donor to catalyze the transfer of sulfate to position 6 of non-reducing N-acetylglucosamine (GlcNAc) residues within keratan-like structures on N-linked glycans and within mucin-associated glycans that can ultimately serve as SELL ligands. SELL ligands are present in high endothelial cells (HEVs) and play a central role in lymphocyte homing at sites of inflammation. Participates in biosynthesis of the SELL ligand sialyl 6-sulfo Lewis X and in lymphocyte homing to Peyer patches. Has no activity toward O-linked sugars. Its substrate specificity may be influenced by its subcellular location. Sulfates GlcNAc residues at terminal, non-reducing ends of oligosaccharide chains. The protein is Carbohydrate sulfotransferase 2 (CHST2) of Homo sapiens (Human).